The primary structure comprises 400 residues: MMDLRNTPAKSLDKFIEDYLLPDTCFRMQINHAIDIICGFLKERCFRGSSYPVCVSKVVKGGSSGKGTTLRGRSDADLVVFLSPLTTFQDQLNRRGEFIQEIRRQLEACQRERAFSVKFEVQAPRWGNPRALSFVLSSLQLGEGVEFDVLPAFDALGQLTGGYKPNPQIYVKLIEECTDLQKEGEFSTCFTELQRDFLKQRPTKLKSLIRLVKHWYQNCKKKLGKLPPQYALELLTVYAWERGSMKTHFNTAQGFRTVLELVINYQQLCIYWTKYYDFKNPIIEKYLRRQLTKPRPVILDPADPTGNLGGGDPKGWRQLAQEAEAWLNYPCFKNWDGSPVSSWILLAESNSADDETDDPRRYQKYGYIGTHEYPHFSHRPSTLQAASTPQAEEDWTCTIL.

Residues 13–60 are interaction with dsRNA; the sequence is DKFIEDYLLPDTCFRMQINHAIDIICGFLKERCFRGSSYPVCVSKVVK. An ATP-binding site is contributed by S63. D75, D77, and D148 together coordinate Mg(2+). The interaction with dsRNA stretch occupies residues 200 to 210; it reads QRPTKLKSLIR. The ATP site is built by R210, K213, and Q229. C397 carries the S-geranylgeranyl cysteine lipid modification.

This sequence belongs to the 2-5A synthase family. As to quaternary structure, monomer. Homotetramer. Mg(2+) serves as cofactor. In terms of processing, prenylated at C-terminal. C-terminal prenylation is necessary to initiate a block to SARS-CoV-2 and is associated with protection from severe COVID-1. The prenylated form is targeted to perinuclear structures rich in viral dsRNA, whereas the non-prenylated form is diffusely localized and unable to initiate a detectable block to SARS-CoV-2 replication. C-terminal prenylation is also necessary to initiate a block to cardiovirus EMCV. Post-translationally, not prenylated at C-terminal. The non-prenylated form is diffusely localized and unable to initiate a detectable block to SARS-CoV-2 replication. In terms of tissue distribution, expressed in lungs.

The protein localises to the cytoplasm. It is found in the mitochondrion. Its subcellular location is the nucleus. It localises to the microsome. The protein resides in the endoplasmic reticulum. The protein localises to the secreted. It carries out the reaction 3 ATP = 5'-triphosphoadenylyl-(2'-&gt;5')-adenylyl-(2'-&gt;5')-adenosine + 2 diphosphate. Its activity is regulated as follows. Produced as a latent enzyme which is activated by dsRNA generated during the course of viral infection. The dsRNA activator must be at least 15 nucleotides long, and no modification of the 2'-hydroxyl group is tolerated. ssRNA or dsDNA do not act as activators. Functionally, interferon-induced, dsRNA-activated antiviral enzyme which plays a critical role in cellular innate antiviral response. In addition, it may also play a role in other cellular processes such as apoptosis, cell growth, differentiation and gene regulation. Synthesizes higher oligomers of 2'-5'-oligoadenylates (2-5A) from ATP which then bind to the inactive monomeric form of ribonuclease L (RNase L) leading to its dimerization and subsequent activation. Activation of RNase L leads to degradation of cellular as well as viral RNA, resulting in the inhibition of protein synthesis, thus terminating viral replication. Can mediate the antiviral effect via the classical RNase L-dependent pathway or an alternative antiviral pathway independent of RNase L. The secreted form displays antiviral effect against vesicular stomatitis virus (VSV), herpes simplex virus type 2 (HSV-2), and encephalomyocarditis virus (EMCV) and stimulates the alternative antiviral pathway independent of RNase L. Its function is as follows. When prenylated at C-terminal, acts as a double-stranded RNA (dsRNA) sensor specifically targeted to membranous replicative organelles in SARS coronavirus-2/SARS-CoV-2 infected cells where it binds to dsRNA structures in the SARS-CoV-2 5'-UTR and initiates a potent block to SARS-CoV-2 replication. Recognizes short stretches of dsRNA and activates RNase L. The binding is remarkably specific, with two conserved stem loops in the SARS-CoV-2 5'- untranslated region (UTR) constituting the principal viral target. The same mechanism is necessary to initiate a block to cardiovirus EMCV. Not prenylated at C-terminal, is diffusely localized and unable to initiate a detectable block to SARS-CoV-2 replication. In Homo sapiens (Human), this protein is 2'-5'-oligoadenylate synthase 1 (OAS1).